A 519-amino-acid polypeptide reads, in one-letter code: tRNA-2-methylthio-N(6)-dimethylallyladenosine synthase (519 aa).

The interval 1–23 (MNEQQRKQQSQIRTEQANVDRIK) is disordered. A compositionally biased stretch (polar residues) spans 7 to 17 (KQQSQIRTEQA). Residues 76-194 (KKFLIRTYGC…LPHLVKEALF (119 aa)) form the MTTase N-terminal domain. [4Fe-4S] cluster contacts are provided by cysteine 85, cysteine 121, cysteine 155, cysteine 231, cysteine 235, and cysteine 238. In terms of domain architecture, Radical SAM core spans 217-450 (RKGKIKAWVN…VNKQSAASMK (234 aa)). The region spanning 450-513 (KDYAGKKVKV…TWSLNGVMVE (64 aa)) is the TRAM domain.

The protein belongs to the methylthiotransferase family. MiaB subfamily. In terms of assembly, monomer. Requires [4Fe-4S] cluster as cofactor.

It localises to the cytoplasm. It carries out the reaction N(6)-dimethylallyladenosine(37) in tRNA + (sulfur carrier)-SH + AH2 + 2 S-adenosyl-L-methionine = 2-methylsulfanyl-N(6)-dimethylallyladenosine(37) in tRNA + (sulfur carrier)-H + 5'-deoxyadenosine + L-methionine + A + S-adenosyl-L-homocysteine + 2 H(+). Its function is as follows. Catalyzes the methylthiolation of N6-(dimethylallyl)adenosine (i(6)A), leading to the formation of 2-methylthio-N6-(dimethylallyl)adenosine (ms(2)i(6)A) at position 37 in tRNAs that read codons beginning with uridine. This Oceanobacillus iheyensis (strain DSM 14371 / CIP 107618 / JCM 11309 / KCTC 3954 / HTE831) protein is tRNA-2-methylthio-N(6)-dimethylallyladenosine synthase.